The sequence spans 156 residues: UPF0756 membrane protein Exig_2210 (156 aa).

5 helical membrane-spanning segments follow: residues 5–25 (LFLI…LIIA), 52–72 (WGVT…DIGF), 83–103 (IGII…HGVG), 109–129 (PLVT…FRGV), and 131–151 (VGPL…DIIV).

This sequence belongs to the UPF0756 family.

Its subcellular location is the cell membrane. This Exiguobacterium sibiricum (strain DSM 17290 / CCUG 55495 / CIP 109462 / JCM 13490 / 255-15) protein is UPF0756 membrane protein Exig_2210.